Consider the following 1052-residue polypeptide: Protein argonaute 14 (1052 aa).

The segment covering 1-39 (MASRGGDGLVGGGRGPLGGRDGRGRGPAGGRGGGRGGGH) has biased composition (gly residues). 2 disordered regions span residues 1-127 (MASR…TPAV) and 170-194 (GGRP…APPS). Positions 40–49 (PQQQQQQQPG) are enriched in low complexity. Gly residues-rich tracts occupy residues 50-59 (YGRGDGGGRG) and 66-81 (GVVG…GGRG). The segment covering 97–117 (VRPAMAAAPAASTPGPVAVAA) has biased composition (low complexity). Residues 173–183 (PAPPAAPPAPI) show a composition bias toward pro residues. The PAZ domain maps to 394-510 (SVVEYVKNCL…LPMEVCTIVE (117 aa)). One can recognise a Piwi domain in the interval 677–1009 (LLIVILPDVN…AAFRARYYDE (333 aa)).

The protein belongs to the argonaute family. Ago subfamily. In terms of tissue distribution, expressed in seeds.

Probably involved in the RNA silencing pathway. May bind to short RNAs such as microRNAs (miRNAs) or short interfering RNAs (siRNAs), and represses the translation of mRNAs which are complementary to them. The sequence is that of Protein argonaute 14 (AGO14) from Oryza sativa subsp. japonica (Rice).